We begin with the raw amino-acid sequence, 102 residues long: Large ribosomal subunit protein uL23c (102 aa).

It belongs to the universal ribosomal protein uL23 family. Part of the 50S ribosomal subunit.

The protein resides in the plastid. The protein localises to the chloroplast. Binds to 23S rRNA. The chain is Large ribosomal subunit protein uL23c (rpl23) from Trieres chinensis (Marine centric diatom).